The sequence spans 126 residues: Aspartate 1-decarboxylase (126 aa).

Ser-25 (schiff-base intermediate with substrate; via pyruvic acid) is an active-site residue. Residue Ser-25 is modified to Pyruvic acid (Ser). Thr-57 provides a ligand contact to substrate. The Proton donor role is filled by Tyr-58. Residue 73–75 (GGA) participates in substrate binding.

The protein belongs to the PanD family. In terms of assembly, heterooctamer of four alpha and four beta subunits. Requires pyruvate as cofactor. In terms of processing, is synthesized initially as an inactive proenzyme, which is activated by self-cleavage at a specific serine bond to produce a beta-subunit with a hydroxyl group at its C-terminus and an alpha-subunit with a pyruvoyl group at its N-terminus.

The protein localises to the cytoplasm. The enzyme catalyses L-aspartate + H(+) = beta-alanine + CO2. It participates in cofactor biosynthesis; (R)-pantothenate biosynthesis; beta-alanine from L-aspartate: step 1/1. Catalyzes the pyruvoyl-dependent decarboxylation of aspartate to produce beta-alanine. This is Aspartate 1-decarboxylase from Xanthomonas oryzae pv. oryzae (strain MAFF 311018).